The primary structure comprises 72 residues: Protein kish-A (72 aa).

An N-terminal signal peptide occupies residues 1–26 (MSAIFNFQSLLTVILLLICTCAYIRS). The Extracellular portion of the chain corresponds to 27 to 53 (LAPSLLDRNKTGLLGIFWKCARIGERK). Asparagine 35 carries N-linked (GlcNAc...) asparagine glycosylation. Residues 54–71 (SPYVAVCCIVMAFSILFI) form a helical membrane-spanning segment. Glutamine 72 is a topological domain (cytoplasmic).

This sequence belongs to the KISH family.

The protein localises to the golgi apparatus membrane. Involved in the early part of the secretory pathway. The chain is Protein kish-A (TMEM167A) from Bos taurus (Bovine).